Here is a 639-residue protein sequence, read N- to C-terminus: E3 ubiquitin-protein ligase RNF12 (639 aa).

Disordered stretches follow at residues 1–28 (MESADSAGKGSTEQSESQRQSQMDRLDR), 67–403 (RLQQ…ESER), and 467–534 (NDTD…GGVT). The span at 11–21 (STEQSESQRQS) shows a compositional bias: low complexity. 2 stretches are compositionally biased toward polar residues: residues 110 to 138 (SVRQTGNTTRSGQRGNQSWRAVSRTNPNS) and 147 to 166 (INVNRTSGNPSMPSLEQSSE). Residues 213–228 (RSPDQRRTRARTDRSR) are compositionally biased toward basic and acidic residues. Residues 244–253 (HSSSQTVDAS) are compositionally biased toward polar residues. Residues 269-286 (SSQMQNSSSSNETEGSSR) show a composition bias toward low complexity. Over residues 290-302 (HITARQQALGTEG) the composition is skewed to polar residues. Composition is skewed to low complexity over residues 303–327 (QSQSQTQTQSQSQTQTQSQTQSQST) and 335–348 (SRSSSQPPQTDSSS). Positions 349–358 (NAETTGTGQR) are enriched in polar residues. Over residues 372-382 (RPGDYRQRDSI) the composition is skewed to basic and acidic residues. Residues 383–399 (ANRTRSRSQTPNNTVTY) show a composition bias toward polar residues. Pro residues-rich tracts occupy residues 473–482 (NPTPVSPPAA) and 493–506 (PEPPAPIVEPPEPV). The RING-type; atypical zinc finger occupies 585–626 (CSVCITEYTEGNKLRKLPCSHEYHVHCIDRWLSENSTCPICR). A PDZ-binding motif is present at residues 636–639 (ESIV).

This sequence belongs to the RNF12 family. Forms homodimers through the C-terminal region. The N-terminus interacts with the homeobox of LIM/homeobox factor lhx1/lim1, with lhx3/lim3 and lhx5/lim5, and with the N-terminus of ldb1.

It localises to the nucleus. The enzyme catalyses S-ubiquitinyl-[E2 ubiquitin-conjugating enzyme]-L-cysteine + [acceptor protein]-L-lysine = [E2 ubiquitin-conjugating enzyme]-L-cysteine + N(6)-ubiquitinyl-[acceptor protein]-L-lysine.. It functions in the pathway protein modification; protein ubiquitination. In terms of biological role, acts as an E3 ubiquitin-protein ligase specific for ldb1, mediating ubiquitination and proteasome-dependent degradation of excess ldb1 in a RING-dependent manner. Does not degrade ldb1 bound to lhx1/lim1, nor lim1 itself and thus contributes to the establishment of proper ldb1-lhx1/lim1 stoichiometry and the formation of a ldb1-lhx1/lim1 complex. Interferes with Spemann organizer function and suppresses secondary axis formation induced by ldb1 and lhx1/lim1. The chain is E3 ubiquitin-protein ligase RNF12 from Xenopus tropicalis (Western clawed frog).